Here is a 261-residue protein sequence, read N- to C-terminus: Putative [LysW]-aminoadipate/[LysW]-glutamate kinase (261 aa).

Substrate-binding positions include 35–36 (GG), R62, and N162.

Belongs to the acetylglutamate kinase family. LysZ subfamily.

Its subcellular location is the cytoplasm. The catalysed reaction is [amino-group carrier protein]-C-terminal-N-(1,4-dicarboxybutan-1-yl)-L-glutamine + ATP = [amino-group carrier protein]-C-terminal-N-(1-carboxy-5-phosphooxy-5-oxopentan-1-yl)-L-glutamine + ADP. It catalyses the reaction [amino-group carrier protein]-C-terminal-gamma-(L-glutamyl)-L-glutamate + ATP = [amino-group carrier protein]-C-terminal-gamma-(5-phospho-L-glutamyl)-L-glutamate + ADP. It functions in the pathway amino-acid biosynthesis; L-lysine biosynthesis via AAA pathway; L-lysine from L-alpha-aminoadipate (Thermus route): step 2/5. It participates in amino-acid biosynthesis; L-arginine biosynthesis. In terms of biological role, involved in both the arginine and lysine biosynthetic pathways. Phosphorylates the LysW-bound precursors glutamate (for arginine biosynthesis), respectively alpha-aminoadipate (for lysine biosynthesis). The polypeptide is Putative [LysW]-aminoadipate/[LysW]-glutamate kinase (Pyrobaculum islandicum (strain DSM 4184 / JCM 9189 / GEO3)).